We begin with the raw amino-acid sequence, 565 residues long: MSEQKLALNEYLKTDSDYLRGTIKEGLDSSVTGSFSDGDQQLIKFHGFYQQDDRDLRNERKEQKLEPLYSFMLRARVPGGICTPQQWLGVDKIASTLTSSNSIRLTTRQTFQYHGIPKRNLKTIIQDLDRQALDSIAACGDVNRNVMCNPNPVESKLHEQAYAVAKKLSDHLLPHTRAYAEIWLDEEKLLTTEDETVEPVYGKTYLPRKFKMAVAVPPDNDVDVYTNDLGFIAVAENGELVGFNLTAGGGMGSTHGEVETFPRLADDFGFIKTEDVMKFAEAVMTVQRDWGNRSNRKRSRLKYTIVDHGYEKFKAEVEARAGVKFEPKRDVVIGDRGDRYGWVEGVDGKWHLTLFIESGRIKDLPGQTLQTGLREIAKIHKGDFRMTSNQNMIIAGVAAEDKATIEGLARKHGLLGQVLTQTRGHSIACVALPTCPLAMAEAERYFPEFIDHIDALQAKHGISEQAIVVRMTGCPNGCARPFAAEIGLVGKAPGRYNLYLGASFEGTRLNKMHRENIQEADILAELDTLFGRYAVERDAGETFGNFTVRVGVVKAVIDAAKDFHG.

Residues C429, C435, C474, and C478 each coordinate [4Fe-4S] cluster. Residue C478 coordinates siroheme.

This sequence belongs to the nitrite and sulfite reductase 4Fe-4S domain family. As to quaternary structure, alpha(8)-beta(8). The alpha component is a flavoprotein, the beta component is a hemoprotein. The cofactor is siroheme. It depends on [4Fe-4S] cluster as a cofactor.

The enzyme catalyses hydrogen sulfide + 3 NADP(+) + 3 H2O = sulfite + 3 NADPH + 4 H(+). The protein operates within sulfur metabolism; hydrogen sulfide biosynthesis; hydrogen sulfide from sulfite (NADPH route): step 1/1. Functionally, component of the sulfite reductase complex that catalyzes the 6-electron reduction of sulfite to sulfide. This is one of several activities required for the biosynthesis of L-cysteine from sulfate. The sequence is that of Sulfite reductase [NADPH] hemoprotein beta-component from Shewanella sp. (strain W3-18-1).